Here is a 333-residue protein sequence, read N- to C-terminus: Starch-binding domain-containing protein 1 (333 aa).

Topologically, residues 1 to 6 (MGAVWS) are extracellular. A helical transmembrane segment spans residues 7–23 (ALLVGGGLAGALILWLL). The Cytoplasmic segment spans residues 24–333 (RGDSGAPGKD…KVVHGWWGIH (310 aa)). Disordered stretches follow at residues 31 to 73 (GKDG…ELVS) and 106 to 139 (NAREYVPVGKVPDTHSRANSETSRNQSPESRVGE). The segment covering 50–61 (PGGGPGGGGSGG) has biased composition (gly residues). Residue Ser-67 is modified to Phosphoserine. The span at 124 to 134 (NSETSRNQSPE) shows a compositional bias: polar residues. 2 positions are modified to phosphoserine: Ser-135 and Ser-162. The short motif at 181–187 (HEDWEVV) is the LIR element. A phosphoserine mark is found at Ser-191, Ser-192, Ser-201, Ser-205, Ser-208, Ser-216, and Ser-219. The CBM20 domain maps to 233 to 332 (SVKPRQVSIQ…DKVVHGWWGI (100 aa)).

Interacts with the ATG8 family proteins GABARAP and GABARAPL1. Interacts with several glycogen-associated proteins, such as GYS2 (liver glycogen synthase), GDE (glycogen debranching enzyme), GBE1 (glycogen branching enzyme 1) and EPM2A (Laforin). Ubiquitinated, which leads to proteasomal degradation.

Its subcellular location is the preautophagosomal structure membrane. The protein resides in the endoplasmic reticulum membrane. The protein localises to the cell membrane. It localises to the sarcolemma. It is found in the T-tubule. Acts as a cargo receptor for glycogen. Delivers its cargo to an autophagic pathway called glycophagy, resulting in the transport of glycogen to lysosomes. The polypeptide is Starch-binding domain-containing protein 1 (Rattus norvegicus (Rat)).